Reading from the N-terminus, the 445-residue chain is Phosphoglucosamine mutase 1 (445 aa).

The Phosphoserine intermediate role is filled by Ser-102. Ser-102, Asp-241, Asp-243, and Asp-245 together coordinate Mg(2+). Ser-102 is modified (phosphoserine).

This sequence belongs to the phosphohexose mutase family. The cofactor is Mg(2+). Activated by phosphorylation.

The catalysed reaction is alpha-D-glucosamine 1-phosphate = D-glucosamine 6-phosphate. Functionally, catalyzes the conversion of glucosamine-6-phosphate to glucosamine-1-phosphate. The chain is Phosphoglucosamine mutase 1 from Shewanella baltica (strain OS185).